Reading from the N-terminus, the 496-residue chain is MTKPTTMAIFLVLALSIAQLLPSLVAGTGRPRVIIVGAGISGISAGKRIWEAGIADVLILEATDRIGGRMHKQSFAGVNVEIGANWVEGVNGEKKNPIWPIVNSTLKLRSFRSDFDSLAQNVYKDGGLCDEAYVQKRMDRADEVDKSGENLSATLHPSGRDDMSILSMQRLNDHLPNGPSSPVDMAVDYFTYDYEFAEPPRVTSLQNTVPLPTFTDFGDDTYFVADQRGYESVVHHLAGQYLNADKSGNIADARLKLNKVVREISYSSTGVTVKTEDNSTYQADYVMVSASLGVLQSDLIQFKPQLPSWKILAIYQFDMAVYTKIFVKFPKKFWPEGAGREFFLYASTRRGYYGVWQEFEKQYPDANVLLVTVTDEESRRIEQQPDSQTKAEIMEVVRCMFPDEDVPDATDILVPRWWSDRFFRGSFSNWPIGVSRYEYDQLRAPVGRVYFTGEHTSERYNGYVHGAYLAGIDSAEILINCAQKKMCKYNVGGKHG.

Residues 1–27 form the signal peptide; it reads MTKPTTMAIFLVLALSIAQLLPSLVAG. E61 and R69 together coordinate FAD. N-linked (GlcNAc...) asparagine glycosylation is found at N103 and N150. FAD is bound at residue V261. N278 is a glycosylation site (N-linked (GlcNAc...) asparagine). E454 serves as a coordination point for FAD.

It belongs to the flavin monoamine oxidase family. FAD is required as a cofactor.

The protein localises to the secreted. The protein resides in the extracellular space. Its subcellular location is the apoplast. The protein operates within amine and polyamine degradation; spermine degradation. Its function is as follows. Flavoenzyme involved in polyamine back-conversion. Catalyzes the oxidation of the secondary amino group of polyamines, such as spermine and spermidine. The protein is Polyamine oxidase 6 of Oryza sativa subsp. japonica (Rice).